A 468-amino-acid chain; its full sequence is Putative amidase AmiC (468 aa).

Residues lysine 80 and serine 155 each act as charge relay system in the active site. Serine 179 (acyl-ester intermediate) is an active-site residue.

This sequence belongs to the amidase family.

The enzyme catalyses a monocarboxylic acid amide + H2O = a monocarboxylate + NH4(+). This Mycobacterium leprae (strain TN) protein is Putative amidase AmiC (amiC).